Reading from the N-terminus, the 29-residue chain is Frontoxin VI (29 aa).

An intrachain disulfide couples Cys3 to Cys24.

Expressed by the venom gland.

The protein resides in the secreted. Functionally, binds to muscle nicotinic acetylcholine receptor (nAChR) and inhibit acetylcholine from binding to the receptor, thereby impairing neuromuscular transmission. The sequence is that of Frontoxin VI from Micrurus frontalis (Coral snake).